The primary structure comprises 295 residues: Bis(5'-nucleosyl)-tetraphosphatase, symmetrical (295 aa).

The tract at residues 271 to 295 (LSIEHPRHTHTPRRKAKKRHKRSPK) is disordered. Over residues 277-295 (RHTHTPRRKAKKRHKRSPK) the composition is skewed to basic residues.

Belongs to the Ap4A hydrolase family.

The catalysed reaction is P(1),P(4)-bis(5'-adenosyl) tetraphosphate + H2O = 2 ADP + 2 H(+). Hydrolyzes diadenosine 5',5'''-P1,P4-tetraphosphate to yield ADP. This chain is Bis(5'-nucleosyl)-tetraphosphatase, symmetrical, found in Xylella fastidiosa (strain M23).